Here is a 222-residue protein sequence, read N- to C-terminus: Leucyl/phenylalanyl-tRNA--protein transferase (222 aa).

Belongs to the L/F-transferase family.

The protein localises to the cytoplasm. It catalyses the reaction N-terminal L-lysyl-[protein] + L-leucyl-tRNA(Leu) = N-terminal L-leucyl-L-lysyl-[protein] + tRNA(Leu) + H(+). It carries out the reaction N-terminal L-arginyl-[protein] + L-leucyl-tRNA(Leu) = N-terminal L-leucyl-L-arginyl-[protein] + tRNA(Leu) + H(+). The enzyme catalyses L-phenylalanyl-tRNA(Phe) + an N-terminal L-alpha-aminoacyl-[protein] = an N-terminal L-phenylalanyl-L-alpha-aminoacyl-[protein] + tRNA(Phe). In terms of biological role, functions in the N-end rule pathway of protein degradation where it conjugates Leu, Phe and, less efficiently, Met from aminoacyl-tRNAs to the N-termini of proteins containing an N-terminal arginine or lysine. This chain is Leucyl/phenylalanyl-tRNA--protein transferase, found in Legionella pneumophila (strain Corby).